The primary structure comprises 258 residues: Synapse differentiation-inducing gene protein 1-like (258 aa).

Residues 1-182 (MESLSELQNP…FIVIPPRDHL (182 aa)) are Extracellular-facing. The chain crosses the membrane as a helical span at residues 183 to 203 (GLAIFSMLCCFWPLGIAAFYF). Residues 204–228 (SQGTSKAVTKGDFPLASIASRRALF) lie on the Cytoplasmic side of the membrane. A helical transmembrane segment spans residues 229–249 (LAALSITIGTGVYVGVVVALI). Topologically, residues 250–258 (AYLSKPGHI) are extracellular.

The protein belongs to the CD225/Dispanin family.

The protein localises to the membrane. It is found in the golgi apparatus. The protein resides in the cis-Golgi network. The sequence is that of Synapse differentiation-inducing gene protein 1-like (syndig1l) from Danio rerio (Zebrafish).